The chain runs to 300 residues: 4-hydroxy-tetrahydrodipicolinate synthase (300 aa).

Pyruvate is bound at residue Thr-55. The active-site Proton donor/acceptor is the Tyr-143. Residue Lys-171 is the Schiff-base intermediate with substrate of the active site. Ile-211 provides a ligand contact to pyruvate.

The protein belongs to the DapA family. Homotetramer; dimer of dimers.

The protein resides in the cytoplasm. It catalyses the reaction L-aspartate 4-semialdehyde + pyruvate = (2S,4S)-4-hydroxy-2,3,4,5-tetrahydrodipicolinate + H2O + H(+). The protein operates within amino-acid biosynthesis; L-lysine biosynthesis via DAP pathway; (S)-tetrahydrodipicolinate from L-aspartate: step 3/4. Functionally, catalyzes the condensation of (S)-aspartate-beta-semialdehyde [(S)-ASA] and pyruvate to 4-hydroxy-tetrahydrodipicolinate (HTPA). The protein is 4-hydroxy-tetrahydrodipicolinate synthase of Mycobacterium leprae (strain Br4923).